Consider the following 589-residue polypeptide: ATP-dependent lipid A-core flippase (589 aa).

6 helical membrane passes run valine 33 to isoleucine 53, leucine 70 to serine 90, valine 148 to leucine 168, glycine 170 to alanine 190, leucine 262 to glutamate 282, and threonine 283 to leucine 303. In terms of domain architecture, ABC transmembrane type-1 spans valine 33–lysine 315. Positions isoleucine 347–valine 583 constitute an ABC transporter domain. Glycine 381–threonine 388 lines the ATP pocket.

This sequence belongs to the ABC transporter superfamily. Lipid exporter (TC 3.A.1.106) family. Homodimer.

The protein localises to the cell inner membrane. It catalyses the reaction ATP + H2O + lipid A-core oligosaccharideSide 1 = ADP + phosphate + lipid A-core oligosaccharideSide 2.. Its function is as follows. Involved in lipopolysaccharide (LPS) biosynthesis. Translocates lipid A-core from the inner to the outer leaflet of the inner membrane. Transmembrane domains (TMD) form a pore in the inner membrane and the ATP-binding domain (NBD) is responsible for energy generation. This is ATP-dependent lipid A-core flippase from Alkalilimnicola ehrlichii (strain ATCC BAA-1101 / DSM 17681 / MLHE-1).